We begin with the raw amino-acid sequence, 344 residues long: Outer membrane protein B (344 aa).

An N-terminal signal peptide occupies residues methionine 1–alanine 30.

The protein belongs to the chlamydial OMP family.

Its subcellular location is the cell outer membrane. This Chlamydia pneumoniae (Chlamydophila pneumoniae) protein is Outer membrane protein B (ompB).